The following is a 383-amino-acid chain: tRNA-specific 2-thiouridylase MnmA (383 aa).

ATP is bound by residues Gly11–Ser18 and Met37. The interaction with target base in tRNA stretch occupies residues Asn97–Asp99. The active-site Nucleophile is Cys102. Cysteines 102 and 200 form a disulfide. Gly127 is an ATP binding site. The interaction with tRNA stretch occupies residues Lys150 to Gln152. The active-site Cysteine persulfide intermediate is the Cys200. An interaction with tRNA region spans residues Arg312 to Tyr313. The segment at Ile361 to Val383 is disordered.

This sequence belongs to the MnmA/TRMU family.

The protein localises to the cytoplasm. It catalyses the reaction S-sulfanyl-L-cysteinyl-[protein] + uridine(34) in tRNA + AH2 + ATP = 2-thiouridine(34) in tRNA + L-cysteinyl-[protein] + A + AMP + diphosphate + H(+). Functionally, catalyzes the 2-thiolation of uridine at the wobble position (U34) of tRNA, leading to the formation of s(2)U34. This Halorhodospira halophila (strain DSM 244 / SL1) (Ectothiorhodospira halophila (strain DSM 244 / SL1)) protein is tRNA-specific 2-thiouridylase MnmA.